Consider the following 832-residue polypeptide: SID1 transmembrane family member 2 (832 aa).

Positions 1–18 are cleaved as a signal peptide; the sequence is MIAWRLPLCVLLVASVES. Topologically, residues 19–293 are extracellular; the sequence is HLGALGPKNV…VSQAVTSEAY (275 aa). N-linked (GlcNAc...) asparagine glycosylation is found at asparagine 27, asparagine 54, asparagine 60, asparagine 123, asparagine 141, and asparagine 165. A helical transmembrane segment spans residues 294–314; sequence VGGMLFCLGIFLSFYLLTVLL. Topologically, residues 315–447 are cytoplasmic; that stretch reads ACWENWRQRK…DKRVLRKKYQ (133 aa). Residues serine 401, serine 403, and serine 404 each carry the phosphoserine modification. The helical transmembrane segment at 448 to 468 threads the bilayer; sequence IYFWNIATIAVFYALPVVQLV. At 469–499 the chain is on the extracellular side; sequence ITYQTVVNVTGNQDICYYNFLCAHPLGNLSA. 2 N-linked (GlcNAc...) asparagine glycosylation sites follow: asparagine 476 and asparagine 496. The helical transmembrane segment at 500–520 threads the bilayer; the sequence is FNNILSNLGYILLGLLFLLII. Topologically, residues 521-546 are cytoplasmic; it reads LQREINHNRALLRNDLYALECGIPKH. Residues 547-567 traverse the membrane as a helical segment; sequence FGLFYAMGTALMMEGLLSACY. The Extracellular segment spans residues 568–605; that stretch reads HVCPNYTNFQFDTSFMYMIAGLCMLKLYQKRHPDINAS. Asparagine 572 and asparagine 603 each carry an N-linked (GlcNAc...) asparagine glycan. A helical membrane pass occupies residues 606–626; it reads AYSAYACLAIVIFFSVLGVVF. At 627-631 the chain is on the cytoplasmic side; the sequence is GKGNT. Residues 632–652 form a helical membrane-spanning segment; the sequence is AFWIVFSVIHIISTLLLSTQL. Residues 653–688 are Extracellular-facing; that stretch reads YYMGRWKLDSGIFRRILHVLYTDCIRQCSGPLYTDR. The chain crosses the membrane as a helical span at residues 689–709; it reads MVLLVMGNIINWSLAAYGLIM. The Cytoplasmic portion of the chain corresponds to 710-715; sequence RPNDFA. Residues 716-736 form a helical membrane-spanning segment; it reads SYLLAIGICNLLLYFAFYIIM. Topologically, residues 737 to 746 are extracellular; the sequence is KLRSGERIKL. A helical membrane pass occupies residues 747-767; the sequence is IPLLCIVCTSVVWGFALFFFF. The Cytoplasmic portion of the chain corresponds to 768–796; that stretch reads QGLSTWQKTPAESREHNRDCILLDFFDDH. The chain crosses the membrane as a helical span at residues 797-817; the sequence is DIWHFLSSIAMFGSFLVLLTL. Residues 818–832 are Extracellular-facing; the sequence is DDDLDTVQRDKIYVF.

This sequence belongs to the SID1 family. Interacts with adapter protein complex 1 (AP-1) and AP-2, but not AP-3 and AP-4. Interacts with LAMP2. Glycosylated. Widely expressed, including in the liver, brain and kidney (at protein level).

It is found in the lysosome membrane. The protein resides in the cell membrane. Its function is as follows. Mediates the translocation of RNA and DNA across the lysosomal membrane during RNA and DNA autophagy (RDA), a process in which RNA and DNA is directly imported into lysosomes in an ATP-dependent manner, and degraded. Involved in the uptake of single-stranded oligonucleotides by living cells, a process called gymnosis. In vitro, mediates the uptake of linear DNA more efficiently than that of circular DNA, but exhibits similar uptake efficacy toward RNA and DNA. Binds long double-stranded RNA (dsRNA) (500 - 700 base pairs), but not dsRNA shorter than 100 bp. The chain is SID1 transmembrane family member 2 (Sidt2) from Mus musculus (Mouse).